Reading from the N-terminus, the 530-residue chain is CTP synthase (530 aa).

An amidoligase domain region spans residues 1–267 (MTKYVFVTGG…DDFVLNHFKM (267 aa)). CTP is bound at residue S13. Residue S13 coordinates UTP. Residue 14 to 19 (SLGKGI) coordinates ATP. Y54 is a binding site for L-glutamine. Position 71 (D71) interacts with ATP. 2 residues coordinate Mg(2+): D71 and E141. CTP is bound by residues 148–150 (DIE), 188–193 (KTKPTQ), and K224. Residues 188 to 193 (KTKPTQ) and K224 contribute to the UTP site. 240-242 (RDA) contacts ATP. Positions 292–530 (KIALVGKYIE…LFKAFIGATM (239 aa)) constitute a Glutamine amidotransferase type-1 domain. G354 provides a ligand contact to L-glutamine. Residue C381 is the Nucleophile; for glutamine hydrolysis of the active site. Residues 382–385 (LGMQ), E405, and R463 each bind L-glutamine. Active-site residues include H508 and E510.

Belongs to the CTP synthase family. As to quaternary structure, homotetramer.

It carries out the reaction UTP + L-glutamine + ATP + H2O = CTP + L-glutamate + ADP + phosphate + 2 H(+). It catalyses the reaction L-glutamine + H2O = L-glutamate + NH4(+). The enzyme catalyses UTP + NH4(+) + ATP = CTP + ADP + phosphate + 2 H(+). It participates in pyrimidine metabolism; CTP biosynthesis via de novo pathway; CTP from UDP: step 2/2. With respect to regulation, allosterically activated by GTP, when glutamine is the substrate; GTP has no effect on the reaction when ammonia is the substrate. The allosteric effector GTP functions by stabilizing the protein conformation that binds the tetrahedral intermediate(s) formed during glutamine hydrolysis. Inhibited by the product CTP, via allosteric rather than competitive inhibition. Catalyzes the ATP-dependent amination of UTP to CTP with either L-glutamine or ammonia as the source of nitrogen. Regulates intracellular CTP levels through interactions with the four ribonucleotide triphosphates. This chain is CTP synthase, found in Latilactobacillus sakei subsp. sakei (strain 23K) (Lactobacillus sakei subsp. sakei).